Reading from the N-terminus, the 797-residue chain is Phenylalanine--tRNA ligase beta subunit (797 aa).

A tRNA-binding domain is found at 40 to 154 (MEGLSKLVVG…ADAKVGDSIF (115 aa)). Residues 407-482 (PILPKVSITL…RIYGYDNLPS (76 aa)) form the B5 domain. Mg(2+) contacts are provided by aspartate 460, aspartate 466, glutamate 469, and glutamate 470. The FDX-ACB domain occupies 704–797 (PKVQAVHRDI…LVEKLDIEIR (94 aa)).

The protein belongs to the phenylalanyl-tRNA synthetase beta subunit family. Type 1 subfamily. As to quaternary structure, tetramer of two alpha and two beta subunits. Mg(2+) is required as a cofactor.

The protein localises to the cytoplasm. The enzyme catalyses tRNA(Phe) + L-phenylalanine + ATP = L-phenylalanyl-tRNA(Phe) + AMP + diphosphate + H(+). The protein is Phenylalanine--tRNA ligase beta subunit of Lactococcus lactis subsp. lactis (strain IL1403) (Streptococcus lactis).